The sequence spans 63 residues: Prokaryotic ubiquitin-like protein Pup (63 aa).

The span at 1–11 (MAQEQTRRGGG) shows a compositional bias: basic and acidic residues. Residues 1–36 (MAQEQTRRGGGGDDDEFTSSTSVGQERREKLTEETD) are disordered. The interval 20 to 57 (STSVGQERREKLTEETDDLLDEIDDVLEENAEDFVRAY) is ARC ATPase binding. Positions 23 to 51 (VGQERREKLTEETDDLLDEIDDVLEENAE) form a coiled coil. The residue at position 63 (Gln63) is a Deamidated glutamine. Gln63 participates in a covalent cross-link: Isoglutamyl lysine isopeptide (Gln-Lys) (interchain with K-? in acceptor proteins).

It belongs to the prokaryotic ubiquitin-like protein family. Strongly interacts with the proteasome-associated ATPase ARC through a hydrophobic interface; the interacting region of Pup lies in its C-terminal half. There is one Pup binding site per ARC hexamer ring. In terms of processing, is modified by deamidation of its C-terminal glutamine to glutamate by the deamidase Dop, a prerequisite to the subsequent pupylation process.

Its pathway is protein degradation; proteasomal Pup-dependent pathway. In terms of biological role, protein modifier that is covalently attached to lysine residues of substrate proteins, thereby targeting them for proteasomal degradation. The tagging system is termed pupylation. This chain is Prokaryotic ubiquitin-like protein Pup, found in Mycobacterium leprae (strain Br4923).